The sequence spans 2849 residues: Polycystin-1-like protein 1 (2849 aa).

Residues 1–1748 (MAEEAAQNIS…SDISKLQSHP (1748 aa)) are Extracellular-facing. Residues Asn-8, Asn-295, Asn-338, Asn-376, Asn-447, Asn-482, Asn-514, Asn-605, Asn-657, Asn-751, Asn-875, Asn-926, and Asn-937 are each glycosylated (N-linked (GlcNAc...) asparagine). 2 consecutive PKD domains span residues 508-590 (SVSV…VQKK) and 592-673 (VANR…VCEP). Residues 674–1571 (CQPPLVKNMG…GEEDGLDNRR (898 aa)) enclose the REJ domain. Low complexity predominate over residues 970-987 (NLLPTEPGTADPDATTTP). Disordered stretches follow at residues 970-1068 (NLLP…PHLS) and 1081-1118 (IPSG…DPSL). The span at 1053-1068 (RSERSQPTHSPDPHLS) shows a compositional bias: basic and acidic residues. N-linked (GlcNAc...) asparagine glycans are attached at residues Asn-1233, Asn-1301, Asn-1306, Asn-1572, Asn-1681, and Asn-1716. A GAIN-B domain is found at 1587–1735 (QFTELSENPQ…ALLRRKLKAS (149 aa)). Cys-1691 and Cys-1717 are joined by a disulfide. A GPS region spans residues 1691-1735 (CLFWDKREWKSERFSPQPGTSPEKVNCSYHRLAAFALLRRKLKAS). A helical membrane pass occupies residues 1749–1769 (ENLLPSIFIMGSVILYGFLVA). At 1770–1956 (KSRQVDHHEK…SSSRYLHTPR (187 aa)) the chain is on the cytoplasmic side. One can recognise a PLAT domain in the interval 1796 to 1913 (QLYAVVIDTG…HDGRVERELT (118 aa)). A helical membrane pass occupies residues 1957–1977 (LTVSFSLLCVYACLTALVAAG). Over 1978–1992 (GQEQPHLDVSPTLGS) the chain is Extracellular. A helical membrane pass occupies residues 1993–2013 (FRVGLLCTLLASPGAQLLSLL). Topologically, residues 2014-2135 (FRLSKEAPGS…SRALQPWWSS (122 aa)) are cytoplasmic. Positions 2023-2089 (SARVEPHSPL…GTACPAPKLQ (67 aa)) are disordered. A helical membrane pass occupies residues 2136–2156 (AVWAICGTASLACSLGTGFLA). Over 2157 to 2174 (YRFGQEQCVQWLHLLSLS) the chain is Extracellular. A helical transmembrane segment spans residues 2175–2195 (VVCCIFITQPLMVCLMALGFA). Residues 2196 to 2281 (WKRRADNHFF…QRMRRESRTR (86 aa)) are Cytoplasmic-facing. The helical transmembrane segment at 2282-2302 (AALRDISMDILMLLLLLCVIY) threads the bilayer. Residues 2303-2522 (GRFSQDEYSL…FRSDSALQYH (220 aa)) lie on the Extracellular side of the membrane. N-linked (GlcNAc...) asparagine glycosylation is present at Asn-2426. The helical transmembrane segment at 2523–2543 (LMLPQLVFLALSLIHLCVQLY) threads the bilayer. The Cytoplasmic portion of the chain corresponds to 2544-2562 (RMMDKGVLSYWRKPRNWLE). Residues 2563–2583 (LSVVGVSLTYYAVSGHLVTLA) traverse the membrane as a helical segment. The Extracellular portion of the chain corresponds to 2584 to 2616 (GDVTNQFHRGLCRAFMDLTLMASWNQRARWLRG). Residues 2617–2637 (ILLFLFTLKCVYLPGIQNTMA) traverse the membrane as a helical segment. At 2638–2646 (SCSSMMRHS) the chain is on the cytoplasmic side. A helical transmembrane segment spans residues 2647–2667 (LPSIFVAGLVGALMLAALSHL). Topologically, residues 2668–2711 (HRFLLSMWVLPPGTFTDAFPGLLFHFPRRSQKDCLLGLSKSDQR) are extracellular. A helical transmembrane segment spans residues 2712–2732 (AMACYFGILLIVSATLCFGML). Residues 2733–2849 (RGFLMTLPQK…AAEPADIKDF (117 aa)) are Cytoplasmic-facing.

It belongs to the polycystin family. As to quaternary structure, heterodimer. Interacts with PKD2 to form a calcium channel. Interacts with PKD2L1; to form ciliary calcium channel. May interact with GNA12, GNAS, GNAI1 and GNAI2. In terms of tissue distribution, detected in testis and in fetal and adult heart.

Its subcellular location is the cell projection. It localises to the cilium membrane. Functionally, component of a calcium-permeant ion channel formed by PKD1L2 and PKD1L1 in primary cilia, where it controls cilium calcium concentration, without affecting cytoplasmic calcium concentration, and regulates sonic hedgehog/SHH signaling and GLI2 transcription. The PKD1L1:PKD2L1 channel complex is mechanosensitive only at high pressures and is highly temperature sensitive. Also involved in left/right axis specification downstream of nodal flow by forming a complex with PKD2 in cilia to facilitate flow detection in left/right patterning. May function as a G-protein-coupled receptor. The chain is Polycystin-1-like protein 1 from Homo sapiens (Human).